The following is a 276-amino-acid chain: Large ribosomal subunit protein uL2 (276 aa).

2 disordered regions span residues 30 to 57 and 219 to 276; these read EKSLTEKLSKKGGRNNQGRLTVRHQGGG and TVRG…RSKK.

Belongs to the universal ribosomal protein uL2 family. As to quaternary structure, part of the 50S ribosomal subunit. Forms a bridge to the 30S subunit in the 70S ribosome.

In terms of biological role, one of the primary rRNA binding proteins. Required for association of the 30S and 50S subunits to form the 70S ribosome, for tRNA binding and peptide bond formation. It has been suggested to have peptidyltransferase activity; this is somewhat controversial. Makes several contacts with the 16S rRNA in the 70S ribosome. This is Large ribosomal subunit protein uL2 from Exiguobacterium sibiricum (strain DSM 17290 / CCUG 55495 / CIP 109462 / JCM 13490 / 255-15).